Here is a 305-residue protein sequence, read N- to C-terminus: Porphobilinogen deaminase (305 aa).

An S-(dipyrrolylmethanemethyl)cysteine modification is found at Cys239.

This sequence belongs to the HMBS family. In terms of assembly, monomer. Requires dipyrromethane as cofactor.

It carries out the reaction 4 porphobilinogen + H2O = hydroxymethylbilane + 4 NH4(+). The protein operates within porphyrin-containing compound metabolism; protoporphyrin-IX biosynthesis; coproporphyrinogen-III from 5-aminolevulinate: step 2/4. Functionally, tetrapolymerization of the monopyrrole PBG into the hydroxymethylbilane pre-uroporphyrinogen in several discrete steps. In Dichelobacter nodosus (strain VCS1703A), this protein is Porphobilinogen deaminase.